Reading from the N-terminus, the 248-residue chain is Large ribosomal subunit protein uL1 (248 aa).

This sequence belongs to the universal ribosomal protein uL1 family. Part of the 50S ribosomal subunit.

Functionally, binds directly to 23S rRNA. The L1 stalk is quite mobile in the ribosome, and is involved in E site tRNA release. In terms of biological role, protein L1 is also a translational repressor protein, it controls the translation of the L11 operon by binding to its mRNA. This Orientia tsutsugamushi (strain Boryong) (Rickettsia tsutsugamushi) protein is Large ribosomal subunit protein uL1.